The chain runs to 33 residues: Brevinin-2Rh (33 aa).

A disulfide bond links cysteine 27 and cysteine 33.

As to expression, expressed by the skin glands.

The protein resides in the secreted. Antimicrobial peptide. This chain is Brevinin-2Rh, found in Pelophylax ridibundus (Marsh frog).